Here is a 369-residue protein sequence, read N- to C-terminus: Glutamate 5-kinase (369 aa).

Lys-9 contacts ATP. Substrate-binding residues include Ser-49, Asp-136, and Asn-148. ATP-binding positions include 168 to 169 (TD) and 210 to 216 (TGGMLTK). Residues 275–355 (QGSIWVDKGA…KGVLIYRDDW (81 aa)) enclose the PUA domain.

The protein belongs to the glutamate 5-kinase family.

The protein localises to the cytoplasm. The enzyme catalyses L-glutamate + ATP = L-glutamyl 5-phosphate + ADP. Its pathway is amino-acid biosynthesis; L-proline biosynthesis; L-glutamate 5-semialdehyde from L-glutamate: step 1/2. Functionally, catalyzes the transfer of a phosphate group to glutamate to form L-glutamate 5-phosphate. This is Glutamate 5-kinase from Streptococcus pneumoniae (strain 70585).